Reading from the N-terminus, the 825-residue chain is Endoglucanase C (825 aa).

The first 28 residues, 1-28 (MRNKLRRLLAIMMAVLLITSLFAPMVSA), serve as a signal peptide directing secretion. E219 serves as the catalytic Proton donor. Residue E335 is the Nucleophile of the active site. Over residues 607 to 621 (DRESVPEPVEHDTKG) the composition is skewed to basic and acidic residues. Residues 607-635 (DRESVPEPVEHDTKGDSALPSDFEDGTRQ) are disordered.

The protein belongs to the glycosyl hydrolase 5 (cellulase A) family.

It carries out the reaction Endohydrolysis of (1-&gt;4)-beta-D-glucosidic linkages in cellulose, lichenin and cereal beta-D-glucans.. The polypeptide is Endoglucanase C (celC) (Evansella cellulosilytica (strain ATCC 21833 / DSM 2522 / FERM P-1141 / JCM 9156 / N-4) (Bacillus cellulosilyticus)).